We begin with the raw amino-acid sequence, 610 residues long: Chitinase 63 (610 aa).

Positions M1–A30 are cleaved as a signal peptide. In terms of domain architecture, CBM2 spans A31–S134. Disordered regions lie at residues K125 to I153 and A208 to G239. In terms of domain architecture, Fibronectin type-III spans A144–G229. Residues D213–V224 show a composition bias toward polar residues. Positions E241 to K610 constitute a GH18 domain. Residues D313–Q314 and G340–T343 each bind chitin. The active-site Proton donor is the E383. Chitin-binding positions include Y384, M450–D453, and W590.

This sequence belongs to the glycosyl hydrolase 18 family. Chitinase class II subfamily.

The catalysed reaction is Random endo-hydrolysis of N-acetyl-beta-D-glucosaminide (1-&gt;4)-beta-linkages in chitin and chitodextrins.. This Streptomyces plicatus protein is Chitinase 63 (chtA).